Reading from the N-terminus, the 151-residue chain is Ribosome maturation factor RimP (151 aa).

This sequence belongs to the RimP family.

It localises to the cytoplasm. Required for maturation of 30S ribosomal subunits. The sequence is that of Ribosome maturation factor RimP from Endomicrobium trichonymphae.